A 760-amino-acid polypeptide reads, in one-letter code: Transglutaminase-activating metalloprotease (760 aa).

Positions 1 to 33 (MRPTPQRRAVATGALVAVTAMLAVGVQTTSANA) are cleaved as a signal peptide. Disordered regions lie at residues 32-59 (NAGQ…PVKL) and 228-265 (KQGT…KTYN). The propeptide occupies 34 to 229 (GQDKAAHPAP…KLFEFQGVKQ (196 aa)). Polar residues predominate over residues 228–257 (KQGTGNSQHSGQVQIGTTKSGSSYQMNDTT). His366 serves as a coordination point for Zn(2+). Residue Glu367 is part of the active site. Positions 370 and 390 each coordinate Zn(2+). His454 acts as the Proton donor in catalysis. The P/Homo B domain maps to 640-760 (TVNTTGGGSV…GTIDKWRLTF (121 aa)).

It belongs to the peptidase M4 family. The cofactor is Zn(2+).

It localises to the secreted. Functionally, cleaves the N-terminal propeptide of transglutaminase thus activating it. This is Transglutaminase-activating metalloprotease from Streptomyces mobaraensis (Streptoverticillium mobaraense).